Consider the following 192-residue polypeptide: Peptidyl-tRNA hydrolase (192 aa).

Tyr-14 lines the tRNA pocket. The active-site Proton acceptor is His-19. Residues Tyr-64, Asn-66, and Asn-112 each coordinate tRNA.

It belongs to the PTH family. As to quaternary structure, monomer.

Its subcellular location is the cytoplasm. The enzyme catalyses an N-acyl-L-alpha-aminoacyl-tRNA + H2O = an N-acyl-L-amino acid + a tRNA + H(+). In terms of biological role, hydrolyzes ribosome-free peptidyl-tRNAs (with 1 or more amino acids incorporated), which drop off the ribosome during protein synthesis, or as a result of ribosome stalling. Its function is as follows. Catalyzes the release of premature peptidyl moieties from peptidyl-tRNA molecules trapped in stalled 50S ribosomal subunits, and thus maintains levels of free tRNAs and 50S ribosomes. The chain is Peptidyl-tRNA hydrolase from Anaeromyxobacter dehalogenans (strain 2CP-1 / ATCC BAA-258).